Here is a 409-residue protein sequence, read N- to C-terminus: Phosphoglycerate kinase (409 aa).

Substrate is bound by residues 22 to 24, Arg-37, 60 to 63, Arg-122, and Arg-164; these read DLN and HLSR. Residues Lys-215, Glu-338, and 365–368 each bind ATP; that span reads GGDS.

This sequence belongs to the phosphoglycerate kinase family. In terms of assembly, monomer.

It is found in the cytoplasm. It carries out the reaction (2R)-3-phosphoglycerate + ATP = (2R)-3-phospho-glyceroyl phosphate + ADP. The protein operates within carbohydrate degradation; glycolysis; pyruvate from D-glyceraldehyde 3-phosphate: step 2/5. This Mycoplasma pneumoniae (strain ATCC 29342 / M129 / Subtype 1) (Mycoplasmoides pneumoniae) protein is Phosphoglycerate kinase (pgk).